The sequence spans 179 residues: ADP-ribosylation factor-like protein 5A (179 aa).

G2 is lipidated: N-myristoyl glycine. GTP contacts are provided by residues 23–30 (GLDNAGKT), 66–70 (DIGGQ), 125–128 (NKQD), and A159.

The protein belongs to the small GTPase superfamily. Arf family.

Lacks ADP-ribosylation enhancing activity. This Bos taurus (Bovine) protein is ADP-ribosylation factor-like protein 5A (ARL5A).